The sequence spans 1323 residues: PAS domain-containing serine/threonine-protein kinase (1323 aa).

M1 is modified (N-acetylmethionine). S19 bears the Phosphoserine mark. The segment at 20–47 is disordered; sequence LPLPVSAEGPAAQTTAEPSRSFSSAHRH. Residues 31–43 show a composition bias toward polar residues; that stretch reads AQTTAEPSRSFSS. T34 carries the post-translational modification Phosphothreonine. 2 PAS domains span residues 119 to 190 and 335 to 402; these read SSPL…MEAD and YRAS…SLQL. At S582 the chain carries Phosphoserine. Positions 837 to 857 are disordered; sequence AASDRESPGHVPSTLDAGPED. S939 is modified (phosphoserine). A Protein kinase domain is found at 999-1251; it reads YSTMSPLGSG…LEKLVTDPWV (253 aa). Residues 1005–1013, K1028, and 1082–1089 contribute to the ATP site; these read LGSGAFGFV and EKHGSGLD. D1128 acts as the Proton acceptor in catalysis. D1146 contacts ATP. 2 positions are modified to phosphothreonine; by autocatalysis: T1161 and T1165. A disordered region spans residues 1298-1323; it reads CGGPVPGEAPNGQGCLHPGDPRLLTS.

The protein belongs to the protein kinase superfamily. CAMK Ser/Thr protein kinase family. In terms of processing, autophosphorylated on Thr-1161 and Thr-1165. Autophosphorylation is activated by phospholipids. In terms of tissue distribution, ubiquitously expressed, with slightly higher expression in brain, prostate and testis. Reduced expression was found in placenta. Present in germ cells of testis and in the midpiece of sperm tails (at protein level).

It is found in the cytoplasm. It localises to the nucleus. It catalyses the reaction L-seryl-[protein] + ATP = O-phospho-L-seryl-[protein] + ADP + H(+). It carries out the reaction L-threonyl-[protein] + ATP = O-phospho-L-threonyl-[protein] + ADP + H(+). Protein kinase activity is inhibited by the first PAS domain: binding of an unidentified ligand desinhibits the protein kinase activity. May be activated by autophosphorylation on Thr-1161 and Thr-1165. The activating role of autophosphorylation at Thr-1161 is unclear: according to a report, autophosphorylation at Thr-1161 does not play a major role in activation. Autophosphorylation is enhanced upon phosphatidylinositol monophosphate (phosphatidylinositol 4-phosphate) binding and inhibited upon phosphatidylinositol bi- and tri-phosphate binding. In contrast, phosphorylation of target proteins is inhibited upon all phosphatidylinositol-binding (phosphatidylinositol mono- bi- and tri-phosphate). Its function is as follows. Serine/threonine-protein kinase involved in energy homeostasis and protein translation. Phosphorylates EEF1A1, GYS1, PDX1 and RPS6. Probably plays a role under changing environmental conditions (oxygen, glucose, nutrition), rather than under standard conditions. Acts as a sensor involved in energy homeostasis: regulates glycogen synthase synthesis by mediating phosphorylation of GYS1, leading to GYS1 inactivation. May be involved in glucose-stimulated insulin production in pancreas and regulation of glucagon secretion by glucose in alpha cells; however such data require additional evidences. May play a role in regulation of protein translation by phosphorylating EEF1A1, leading to increase translation efficiency. May also participate in respiratory regulation. The polypeptide is PAS domain-containing serine/threonine-protein kinase (PASK) (Homo sapiens (Human)).